A 164-amino-acid polypeptide reads, in one-letter code: UPF0304 protein YfbU (164 aa).

Belongs to the UPF0304 family.

This Escherichia coli O127:H6 (strain E2348/69 / EPEC) protein is UPF0304 protein YfbU.